We begin with the raw amino-acid sequence, 101 residues long: uncharacterized protein (101 aa).

A helical transmembrane segment spans residues 17–37 (VIKILLISGISRIIILILAMF).

It is found in the endoplasmic reticulum membrane. This is an uncharacterized protein from Schizosaccharomyces pombe (strain 972 / ATCC 24843) (Fission yeast).